A 557-amino-acid polypeptide reads, in one-letter code: Hemolysin transporter protein ShlB (557 aa).

Residues 1-18 (MIKKITALTLLVSTALSA) form the signal peptide. One can recognise a POTRA domain in the interval 79–152 (LPIAGVYLQG…GELGLSVTEG (74 aa)).

It belongs to the TPS (TC 1.B.20) family.

The protein localises to the cell outer membrane. Its function is as follows. Interacts with the cell-bound hemolysin. Necessary for the extracellular secretion and activation of hemolysin. Member of a two partner secretion pathway (TPS) in which it mediates the secretion of hemolysin. The polypeptide is Hemolysin transporter protein ShlB (shlB) (Serratia marcescens).